We begin with the raw amino-acid sequence, 273 residues long: MSDMHSLLIAAILGVVEGLTEFLPVSSTGHMIIVGHLLGFEGDTAKTFEVVIQLGSILAVVVMFWRRLFGLIGIHFGRPLQHEGESKGRLTLIHILLGMIPAVVLGLLFHDTIKSLFNPINVMYALVVGGLLLIAAECLKPKEPRAPGLDDMTYRQAFMIGCFQCLALWPGFSRSGATISGGMLMGVSRYAASEFSFLLAVPMMMGATALDLYKSWGFLTSGDIPMFAVGFITAFVVALIAIKTFLQLIKRISFIPFAIYRFIVAAAVYVVFF.

A run of 7 helical transmembrane segments spans residues 6–26, 45–65, 90–110, 116–136, 190–210, 222–242, and 252–272; these read SLLIAAILGVVEGLTEFLPVS, AKTFEVVIQLGSILAVVVMFW, LTLIHILLGMIPAVVLGLLFH, LFNPINVMYALVVGGLLLIAA, YAASEFSFLLAVPMMMGATAL, GDIPMFAVGFITAFVVALIAI, and ISFIPFAIYRFIVAAAVYVVF.

It belongs to the UppP family.

Its subcellular location is the cell inner membrane. It carries out the reaction di-trans,octa-cis-undecaprenyl diphosphate + H2O = di-trans,octa-cis-undecaprenyl phosphate + phosphate + H(+). Its function is as follows. Catalyzes the dephosphorylation of undecaprenyl diphosphate (UPP). Confers resistance to bacitracin. In Escherichia coli O157:H7, this protein is Undecaprenyl-diphosphatase.